The following is a 121-amino-acid chain: B-box domain protein 31 (121 aa).

The B box-type; atypical zinc-finger motif lies at S26–L72. The PFVFL motif lies at P117–L121.

Highly expressed in shoot apical meristems and in vascular tissues of leaves. Also detected in petioles.

In terms of biological role, developmental regulator acting by forming heterodimeric complexes, that sequester CO and CO-like (COL) proteins into non-functional complexes. Involved in the CO-mediated long-day flowering-promotion pathway. Engages CO and the transcriptional repressor TPL in a tripartite complex. The polypeptide is B-box domain protein 31 (Arabidopsis thaliana (Mouse-ear cress)).